A 1157-amino-acid polypeptide reads, in one-letter code: DNA-directed RNA polymerase subunit beta (1157 aa).

The protein belongs to the RNA polymerase beta chain family. The RNAP catalytic core consists of 2 alpha, 1 beta, 1 beta' and 1 omega subunit. When a sigma factor is associated with the core the holoenzyme is formed, which can initiate transcription.

The catalysed reaction is RNA(n) + a ribonucleoside 5'-triphosphate = RNA(n+1) + diphosphate. Functionally, DNA-dependent RNA polymerase catalyzes the transcription of DNA into RNA using the four ribonucleoside triphosphates as substrates. The polypeptide is DNA-directed RNA polymerase subunit beta (Tropheryma whipplei (strain Twist) (Whipple's bacillus)).